We begin with the raw amino-acid sequence, 991 residues long: MAGPVSLRELLMGASAWLGSESPGGPSAEGGGNAAGTPEPPWREDEICVVGIFGKTALRLNSEKFSLVNTVCDRQVFPLFHHQDPGDPGTGIKTKAVSVGEAGGAGDPGAAAGDSLRGGMATAEGNRAEPGPQDFSLLQAYYNQESKVLYLILTSICDNSQLLRACRALQSGEAGGGLSLPHAETHEFWKHQEKLQCLSLLYLFSVCHILLLVHPTCSFDITYDRVFRALDGLRQKVLPLLKTAIKDCPVGKDWKLNCRPCPPRLLFLFQLNGALKVEPPRSQDTAHPDKPKKHSPKRRLQHALEDQIYRIFRKSRVLTNQSINCLFTVPANQAFVYIVPGSQEEDPIGMLLDQLRSHCTVKDPESLLVPAPLSGPRRYQAMRQHSRQQLSFHIDSSTSSSSGQLVDFTLREFLWQHVELVLSKKGFDDSVGRNPQPSHFELPTYQKWISAAAKLYEVAIDGKEEDLGSPTGELTSKILSSIKVLEGFLDIDTKFSENRCQKALPMAHSAYQSNLPHNYTMTVHKNQLAQALRVYSQHARGPAFHKYAMQLHEDCYKFWSNGHQLCEERSLTDQHCVHKFHSLPKSGEKPEADRNPPVLYHNSRARSTGACNCGRKQAPRDDPFDIKAANYDFYQLLEEKCCGKLDHINFPVFEPSTPDPAPAKNEPSPAPPDSDAEKLKEKEPQTQGESTSLSLALSLGQSTDSLGTYPADPQAGGDNPEVHGQGEGKSEKRPNLVDRQASTVEYLPGMLHSNCPKGLLPKFSSWSLVKLGPAKSYNFHTGLDQQGFVPGTNYLMPWDIVIRTRAEDEGDLDTNSWPAPNKAIPGKRSAVVMGRGRRRDDIARAFVGFEYEDSRGRRFMCSGPDKVMKVMGSGPKESALKALNSDMPLYILSSSQGRGLKPHYAQLMRLFVVVPDAPLQIILMPQVQPGPPPCPVFYPEKQEITLPPDGLWVLRFPYAYVTERGPCFPPKENVQLMSYKVLRGVLKAVTQ.

Disordered regions lie at residues 18–41 (LGSE…PEPP), 100–129 (GEAG…NRAE), and 278–299 (EPPR…PKRR). The residue at position 115 (serine 115) is a Phosphoserine. Residues 278 to 289 (EPPRSQDTAHPD) are compositionally biased toward basic and acidic residues. Residues 290 to 299 (KPKKHSPKRR) show a composition bias toward basic residues. Serine 469 and serine 668 each carry phosphoserine. The interval 653-738 (FEPSTPDPAP…KSEKRPNLVD (86 aa)) is disordered. The span at 675-684 (DAEKLKEKEP) shows a compositional bias: basic and acidic residues. Over residues 685-706 (QTQGESTSLSLALSLGQSTDSL) the composition is skewed to polar residues. Over residues 720-736 (PEVHGQGEGKSEKRPNL) the composition is skewed to basic and acidic residues. Phosphoserine is present on residues serine 742 and serine 895. Position 898 is an omega-N-methylarginine (arginine 898).

It belongs to the SMG8 family. Component of the SMG1C complex composed of SMG1, SMG8 and SMG9; the recruitment of SMG8 to SMG1 N-terminus induces a large conformational change in the SMG1 C-terminal head domain containing the catalytic domain. Forms heterodimers with SMG9; this assembly form may represent a SMG1C intermediate form. Phosphorylated by SMG1.

Functionally, involved in nonsense-mediated decay (NMD) of mRNAs containing premature stop codons. Is recruited by release factors to stalled ribosomes together with SMG1 and SMG9 (forming the SMG1C protein kinase complex) and, in the SMG1C complex, is required to mediate the recruitment of SMG1 to the ribosome:SURF complex and to suppress SMG1 kinase activity until the ribosome:SURF complex locates the exon junction complex (EJC). Acts as a regulator of kinase activity. This is Nonsense-mediated mRNA decay factor SMG8 (Smg8) from Mus musculus (Mouse).